A 134-amino-acid chain; its full sequence is Large ribosomal subunit protein bL20 (134 aa).

It belongs to the bacterial ribosomal protein bL20 family.

Binds directly to 23S ribosomal RNA and is necessary for the in vitro assembly process of the 50S ribosomal subunit. It is not involved in the protein synthesizing functions of that subunit. This chain is Large ribosomal subunit protein bL20, found in Rhizobium etli (strain ATCC 51251 / DSM 11541 / JCM 21823 / NBRC 15573 / CFN 42).